A 442-amino-acid polypeptide reads, in one-letter code: Ribosomal protein uS12 methylthiotransferase RimO (442 aa).

One can recognise an MTTase N-terminal domain in the interval 8–118 (PKVGFVSLGC…VLGHVHKYVE (111 aa)). 6 residues coordinate [4Fe-4S] cluster: cysteine 17, cysteine 53, cysteine 82, cysteine 150, cysteine 154, and cysteine 157. The Radical SAM core domain occupies 136 to 373 (LTPRHYAYLK…MELQQQVSIR (238 aa)). The TRAM domain occupies 376–442 (ARKVGKEMLV…EYDLWASLID (67 aa)).

It belongs to the methylthiotransferase family. RimO subfamily. It depends on [4Fe-4S] cluster as a cofactor.

The protein resides in the cytoplasm. It carries out the reaction L-aspartate(89)-[ribosomal protein uS12]-hydrogen + (sulfur carrier)-SH + AH2 + 2 S-adenosyl-L-methionine = 3-methylsulfanyl-L-aspartate(89)-[ribosomal protein uS12]-hydrogen + (sulfur carrier)-H + 5'-deoxyadenosine + L-methionine + A + S-adenosyl-L-homocysteine + 2 H(+). Its function is as follows. Catalyzes the methylthiolation of an aspartic acid residue of ribosomal protein uS12. The chain is Ribosomal protein uS12 methylthiotransferase RimO from Aeromonas hydrophila subsp. hydrophila (strain ATCC 7966 / DSM 30187 / BCRC 13018 / CCUG 14551 / JCM 1027 / KCTC 2358 / NCIMB 9240 / NCTC 8049).